Here is a 468-residue protein sequence, read N- to C-terminus: 3-isopropylmalate dehydratase large subunit (468 aa).

Residues C346, C406, and C409 each contribute to the [4Fe-4S] cluster site.

Belongs to the aconitase/IPM isomerase family. LeuC type 1 subfamily. In terms of assembly, heterodimer of LeuC and LeuD. [4Fe-4S] cluster is required as a cofactor.

The enzyme catalyses (2R,3S)-3-isopropylmalate = (2S)-2-isopropylmalate. It functions in the pathway amino-acid biosynthesis; L-leucine biosynthesis; L-leucine from 3-methyl-2-oxobutanoate: step 2/4. Catalyzes the isomerization between 2-isopropylmalate and 3-isopropylmalate, via the formation of 2-isopropylmaleate. The protein is 3-isopropylmalate dehydratase large subunit of Cyanothece sp. (strain PCC 7425 / ATCC 29141).